The primary structure comprises 663 residues: Methionine--tRNA ligase (663 aa).

The 'HIGH' region signature appears at 10–20; that stretch reads AYTNGPLHLGH. Positions 142, 145, 154, and 157 each coordinate Zn(2+). Positions 323–327 match the 'KMSKS' region motif; it reads KMSTS. Residue T326 coordinates ATP. In terms of domain architecture, tRNA-binding spans 563 to 663; the sequence is YFGNVDLRVG…RDLPVGSKIH (101 aa).

The protein belongs to the class-I aminoacyl-tRNA synthetase family. MetG type 1 subfamily. Homodimer. It depends on Zn(2+) as a cofactor.

The protein resides in the cytoplasm. It catalyses the reaction tRNA(Met) + L-methionine + ATP = L-methionyl-tRNA(Met) + AMP + diphosphate. In terms of biological role, is required not only for elongation of protein synthesis but also for the initiation of all mRNA translation through initiator tRNA(fMet) aminoacylation. This chain is Methionine--tRNA ligase, found in Methanococcus maripaludis (strain C7 / ATCC BAA-1331).